Reading from the N-terminus, the 204-residue chain is Thymidine kinase (204 aa).

Residues 18–25 (GSMFSGKT) and 91–94 (DEGQ) contribute to the ATP site. Glutamate 92 (proton acceptor) is an active-site residue. Cysteine 148, cysteine 151, cysteine 180, and histidine 183 together coordinate Zn(2+).

It belongs to the thymidine kinase family. As to quaternary structure, homotetramer.

It localises to the cytoplasm. It catalyses the reaction thymidine + ATP = dTMP + ADP + H(+). The protein is Thymidine kinase of Bdellovibrio bacteriovorus (strain ATCC 15356 / DSM 50701 / NCIMB 9529 / HD100).